Here is a 301-residue protein sequence, read N- to C-terminus: 3-methyl-2-oxobutanoate hydroxymethyltransferase (301 aa).

Positions 1 to 28 are enriched in low complexity; that stretch reads MATSNSSDSSMSAEVPAPYGNGPANAPA. The interval 1–37 is disordered; that stretch reads MATSNSSDSSMSAEVPAPYGNGPANAPATPSDTAKKP. Residues Asp-82 and Asp-121 each contribute to the Mg(2+) site. 3-methyl-2-oxobutanoate-binding positions include 82–83, Asp-121, and Lys-151; that span reads DS. Position 153 (Glu-153) interacts with Mg(2+). Glu-219 acts as the Proton acceptor in catalysis.

Belongs to the PanB family. In terms of assembly, homodecamer; pentamer of dimers. Requires Mg(2+) as cofactor.

Its subcellular location is the cytoplasm. The enzyme catalyses 3-methyl-2-oxobutanoate + (6R)-5,10-methylene-5,6,7,8-tetrahydrofolate + H2O = 2-dehydropantoate + (6S)-5,6,7,8-tetrahydrofolate. The protein operates within cofactor biosynthesis; (R)-pantothenate biosynthesis; (R)-pantoate from 3-methyl-2-oxobutanoate: step 1/2. Its function is as follows. Catalyzes the reversible reaction in which hydroxymethyl group from 5,10-methylenetetrahydrofolate is transferred onto alpha-ketoisovalerate to form ketopantoate. The chain is 3-methyl-2-oxobutanoate hydroxymethyltransferase from Arthrobacter sp. (strain FB24).